Reading from the N-terminus, the 313-residue chain is L-lactate dehydrogenase (313 aa).

NAD(+) contacts are provided by residues Val11, Asp32, Arg37, Tyr62, and 76–77 (GV). Residues Gln79, Arg85, and 117-120 (NPVD) contribute to the substrate site. NAD(+) contacts are provided by residues 115–117 (ASN) and Ser143. 148 to 151 (DTAR) contacts substrate. Beta-D-fructose 1,6-bisphosphate is bound by residues Arg153 and His168. The active-site Proton acceptor is the His175. Phosphotyrosine is present on Tyr221. Residue Thr230 coordinates substrate.

It belongs to the LDH/MDH superfamily. LDH family. Homotetramer.

It is found in the cytoplasm. It carries out the reaction (S)-lactate + NAD(+) = pyruvate + NADH + H(+). Its pathway is fermentation; pyruvate fermentation to lactate; (S)-lactate from pyruvate: step 1/1. Allosterically activated by fructose 1,6-bisphosphate (FBP). In terms of biological role, catalyzes the conversion of lactate to pyruvate. The sequence is that of L-lactate dehydrogenase from Geotalea daltonii (strain DSM 22248 / JCM 15807 / FRC-32) (Geobacter daltonii).